The primary structure comprises 120 residues: MTREDIIQAIKEMSVLELNELVKACEEEFGVSAAAPVAVAGAVAGGAAEEKTEFDVILASAGANKIKVIKAVREITGLGLKEAKEIVDGAPKTLKEAVSKEEAEDMKAKLAEVGAEVEVK.

It belongs to the bacterial ribosomal protein bL12 family. As to quaternary structure, homodimer. Part of the ribosomal stalk of the 50S ribosomal subunit. Forms a multimeric L10(L12)X complex, where L10 forms an elongated spine to which 2 to 4 L12 dimers bind in a sequential fashion. Binds GTP-bound translation factors.

Forms part of the ribosomal stalk which helps the ribosome interact with GTP-bound translation factors. Is thus essential for accurate translation. In Clostridium botulinum (strain Alaska E43 / Type E3), this protein is Large ribosomal subunit protein bL12.